The sequence spans 222 residues: Probable fimbrial chaperone EcpB (222 aa).

The N-terminal stretch at 1-20 is a signal peptide; the sequence is MKKHLLPLALLLSGISPAQA.

The protein belongs to the EcpB/EcpE family.

In terms of biological role, part of the ecpRABCDE operon, which encodes the E.coli common pilus (ECP). ECP is found in both commensal and pathogenic strains and plays a dual role in early-stage biofilm development and host cell recognition. The polypeptide is Probable fimbrial chaperone EcpB (ecpB) (Escherichia coli O7:K1 (strain IAI39 / ExPEC)).